The primary structure comprises 229 residues: Heptaprenylglyceryl phosphate synthase (229 aa).

Lys-12 is a sn-glycerol 1-phosphate binding site. Residues Asp-14 and Ser-40 each coordinate Mg(2+). Residues 159-164 (YLEYSG), Gly-189, and 209-210 (GN) contribute to the sn-glycerol 1-phosphate site.

It belongs to the GGGP/HepGP synthase family. Group I subfamily. Homodimer. It depends on Mg(2+) as a cofactor.

It carries out the reaction sn-glycerol 1-phosphate + all-trans-heptaprenyl diphosphate = 3-heptaprenyl-sn-glycero-1-phosphate + diphosphate. It participates in membrane lipid metabolism; glycerophospholipid metabolism. In terms of biological role, prenyltransferase that catalyzes in vivo the transfer of the heptaprenyl moiety of heptaprenyl pyrophosphate (HepPP; 35 carbon atoms) to the C3 hydroxyl of sn-glycerol-1-phosphate (G1P), producing heptaprenylglyceryl phosphate (HepGP). This reaction is an ether-bond-formation step in the biosynthesis of archaea-type G1P-based membrane lipids found in Bacillales. In Bacillus cereus (strain G9842), this protein is Heptaprenylglyceryl phosphate synthase.